A 211-amino-acid chain; its full sequence is Protein-methionine-sulfoxide reductase heme-binding subunit MsrQ (211 aa).

A run of 5 helical transmembrane segments spans residues 45 to 65, 82 to 102, 116 to 136, 153 to 173, and 178 to 198; these read HFTGLTALKFLLAALLITPLA, LWCFAWATLHLTSYALLELGV, PYLTLGIISWVILLALAFTST, FVYLVAILAPIHYLWSVKIIS, and IYAGLAVLLLALRYKKLLSLF.

The protein belongs to the MsrQ family. Heterodimer of a catalytic subunit (MsrP) and a heme-binding subunit (MsrQ). It depends on FMN as a cofactor. The cofactor is heme b.

The protein resides in the cell inner membrane. Part of the MsrPQ system that repairs oxidized periplasmic proteins containing methionine sulfoxide residues (Met-O), using respiratory chain electrons. Thus protects these proteins from oxidative-stress damage caused by reactive species of oxygen and chlorine generated by the host defense mechanisms. MsrPQ is essential for the maintenance of envelope integrity under bleach stress, rescuing a wide series of structurally unrelated periplasmic proteins from methionine oxidation, including the primary periplasmic chaperone SurA and the lipoprotein Pal. MsrQ provides electrons for reduction to the reductase catalytic subunit MsrP, using the quinone pool of the respiratory chain. In Escherichia coli O127:H6 (strain E2348/69 / EPEC), this protein is Protein-methionine-sulfoxide reductase heme-binding subunit MsrQ.